Here is a 733-residue protein sequence, read N- to C-terminus: Polyribonucleotide nucleotidyltransferase (733 aa).

Residues D503 and D509 each contribute to the Mg(2+) site. Residues 570–629 (PRLTTIQIPVDAIGMVIGKGGETIRSITEETGAEINIDDDGTVTIACSSPEATKAAVETI) form the KH domain. In terms of domain architecture, S1 motif spans 639-713 (GTIYMGKVRD…GKTKFALSIK (75 aa)).

This sequence belongs to the polyribonucleotide nucleotidyltransferase family. It depends on Mg(2+) as a cofactor.

The protein localises to the cytoplasm. It carries out the reaction RNA(n+1) + phosphate = RNA(n) + a ribonucleoside 5'-diphosphate. In terms of biological role, involved in mRNA degradation. Catalyzes the phosphorolysis of single-stranded polyribonucleotides processively in the 3'- to 5'-direction. The sequence is that of Polyribonucleotide nucleotidyltransferase from Chlorobaculum tepidum (strain ATCC 49652 / DSM 12025 / NBRC 103806 / TLS) (Chlorobium tepidum).